A 375-amino-acid chain; its full sequence is Trichodiene synthase (375 aa).

This sequence belongs to the trichodiene synthase family.

The enzyme catalyses (2E,6E)-farnesyl diphosphate = trichodiene + diphosphate. Its pathway is sesquiterpene biosynthesis; trichothecene biosynthesis. Its function is as follows. TS is a member of the terpene cyclase group of enzymes. It catalyzes the isomerization and cyclization of farnesyl pyro-phosphate to form trichodiene, the first cyclic intermediate in the biosynthetic pathway for trichothecenes. It serves to branch trichothecene biosynthesis from the isoprenoid pathway. The protein is Trichodiene synthase (TRI5) of Fusarium culmorum.